A 163-amino-acid polypeptide reads, in one-letter code: Inorganic pyrophosphatase (163 aa).

Position 8 (Glu-8) interacts with Mg(2+). Substrate contacts are provided by Lys-16, Arg-30, and Tyr-42. Residues Asp-52, Asp-57, Asp-84, and Asp-89 each contribute to the Mg(2+) site. Catalysis depends on Asp-89, which acts as the Proton acceptor. Tyr-126 lines the substrate pocket.

Belongs to the PPase family. As to quaternary structure, homohexamer. Mg(2+) serves as cofactor.

It localises to the cytoplasm. The enzyme catalyses diphosphate + H2O = 2 phosphate + H(+). In terms of biological role, catalyzes the hydrolysis of inorganic pyrophosphate (PPi) forming two phosphate ions. In Streptomyces coelicolor (strain ATCC BAA-471 / A3(2) / M145), this protein is Inorganic pyrophosphatase.